The sequence spans 561 residues: DNA ligase (561 aa).

ATP is bound at residue Glu249. Residue Lys251 is the N6-AMP-lysine intermediate of the active site. ATP-binding residues include Arg256, Arg271, Glu301, Phe340, Arg417, and Lys423.

This sequence belongs to the ATP-dependent DNA ligase family. The cofactor is Mg(2+).

It carries out the reaction ATP + (deoxyribonucleotide)n-3'-hydroxyl + 5'-phospho-(deoxyribonucleotide)m = (deoxyribonucleotide)n+m + AMP + diphosphate.. Functionally, DNA ligase that seals nicks in double-stranded DNA during DNA replication, DNA recombination and DNA repair. The chain is DNA ligase from Methanothermobacter thermautotrophicus (strain ATCC 29096 / DSM 1053 / JCM 10044 / NBRC 100330 / Delta H) (Methanobacterium thermoautotrophicum).